The chain runs to 731 residues: MAFHMPLKELQPVDTSLPEHVVKGAVVIDKEFTIWNHRAVIPSNALHTVFITINLLEQKLTDVVKMAARSMNLSEDDSYGLMADKPKRFITDDNLNSLGSGFILTLCASPDHYVKRITEILTEGNNISQMENAVKTLDEFSLDPALIEAFYRCSSLELLFSLIRDDRVCMSSTLLSTCLRALSSMLELAVGDFTWKSVPNDVVVSMASLVTGKAKREEANTLLAALQMLEQLVIGDDTTRDWILEEVPIETLIRHVEKSDERIALCALSLMNSMIRRCPDDEKRFELIKSLEVVPFRNAVHSSLLRGGGGVRNLNAIEQLVEVQRSLISAYETSPPTDAEVQKILDIESSEDVSEEIREMWKSQIGEHRCGRLAAISMVQFAEKSPQDLRMLISENTMRIEGGKWQLIPMWMRCCDIAAELFRVIPGRDELDRLIVVLFSTETPFPAVFACIVHLFHRTWREMQAKGGEMEKVACVVLEQLRHVLKRREIQDVEELSADLETFSYRAMQEIWREEQLGKENIQLHSEAVIQLKSKLRPKMEELVRINHLNYLKLGAVFRKPQKSKSLAKLAFWHWKLDASEKMLTITGCDGENYVEGVQRDDIRQVWIKDIADVTNNDEIDRKASSSRFTSSPSTQMLRGIRVQLKTTNDMKEGEVLMALTSDETQSVIWLEGLAELIGSKAVKSETDAMVERMLKMELRVRLLNVKLTNPEEKPEIPPIPDDIKSFISKF.

Positions 339–485 constitute an ELMO domain; the sequence is AEVQKILDIE…VVLEQLRHVL (147 aa). Residues 544-679 form the PH domain; that stretch reads VRINHLNYLK…WLEGLAELIG (136 aa). An SH3-binding motif is present at residues 715-718; it reads PEIP.

Interacts with psr-1. Forms a ternary complex with ced-2 and ced-5.

It is found in the cytoplasm. Functionally, involved in programmed apoptosis and necrosis. Required for the cell corpse engulfment process. Has roles in the formation of actin halos and distal tip cell migration. Negatively regulates the unc-6/Netrin receptor unc-5 to control distal tip cell migration along the anterior-posterior axis of the body. Plays no role in amphid axon outgrowth. The chain is Cell death abnormality protein 12 from Caenorhabditis elegans.